Consider the following 419-residue polypeptide: Cyclin-B2-2 (419 aa).

The disordered stretch occupies residues 79–116; that stretch reads QPSSAPLAPIGSERQKRTADSAFHGPADMECTKITSDD.

This sequence belongs to the cyclin family. Cyclin AB subfamily. As to quaternary structure, interacts with CDKB2-1. In terms of tissue distribution, expressed in the intercalary meristem and the elongation zone of internodes. Expressed in adventitious roots at all nodes under submergence conditions.

Its subcellular location is the nucleus. Its function is as follows. Involved in the control of the cell cycle at the G2/M (mitosis) transition. May associate to CDKB2-1 and activate CDKB2-1 kinase to promote cell division. This is Cyclin-B2-2 (CYCB2-2) from Oryza sativa subsp. indica (Rice).